A 90-amino-acid polypeptide reads, in one-letter code: uncharacterized protein (90 aa).

Residues 1-20 form the signal peptide; the sequence is MEKLFVLVFALALLAFSSDA.

It localises to the secreted. This is an uncharacterized protein from Mus musculus (Mouse).